The sequence spans 579 residues: MNAIVALCHFCELHGPRTLFCTEVLHAPLPQGAGSGDSPGQVEQAEEEEGGIQMSSRVRAHSPAEGASTDSSSPGPKKSDMCEGCRSLAVGHPGYISHDKETSIKYVSHQHPNHPQLFSIVRQACVRSLSCEVCPGREGPIFFGDEQHGFVFSHTFFIKDSLARGFQRWYSIIAIMMDRIYLINSWPFLLGKIRGIISELQGKALKVFEAEQFGCPQRAQRMNTAFTPFLHQRNGNAARSLTSLTSDDNLWACLHTSFAWLLKACGSRLTEKLLEGAPTEDTLVQMEKLADLEEESESWDNSEAEEEEKAPATAEGAEGRELASCPTESSFLSACGSWQPPKLSVFKSLRHMRQVLGAPSFRMLAWHVLMGNQVIWKSRDVNLVHSAFEVLRTMLPVGCVRIIPYSSQYEEAYRCNFLGLSPPVPIPAHVLASEFVVVVEVHTATRSNPHPAGCEDDQSLSKYEFVVTSGSPVAADRVGPTILNKMEAALTNQNLSVDVVDQCLVCLKEEWMNKVKVLFKFTKVDSRPKEDTQKLLSVLGASEEDNVKLLKFWMTGLSKTYKSHLMSTVRSPTAAESRN.

The tract at residues Gly-32–Cys-82 is disordered. Phosphoserine is present on residues Ser-62 and Ser-73. A uDENN FLCN/SMCR8-type domain is found at Arg-86 to Thr-242. A coiled-coil region spans residues Glu-287–Ala-310. Residues Glu-294–Glu-308 are compositionally biased toward acidic residues. The interval Glu-294–Arg-320 is disordered. Phosphoserine occurs at positions 302, 406, 537, 542, and 571. The 153-residue stretch at Gln-339–Thr-491 folds into the cDENN FLCN/SMCR8-type domain. The dDENN FLCN/SMCR8-type domain occupies Gln-493–Ser-558.

The protein belongs to the folliculin family. As to quaternary structure, interacts (via C-terminus) with FNIP1 or FNIP2 (via C-terminus). Component of the lysosomal folliculin complex (LFC), composed of FLCN, FNIP1 (or FNIP2), RagA/RRAGA or RagB/RRAGB GDP-bound, RagC/RRAGC or RagD/RRAGD GTP-bound, and Ragulator. Interaction with FNIP1 or FNIP2 mediates indirect interaction with the PRKAA1, PRKAB1 and PRKAG1 subunits of 5'-AMP-activated protein kinase (AMPK). Interacts with HSP90AA1 in the presence of FNIP1. Interacts with HSP70, STUB1, CDC37, AHSA1, CCT2, STIP1, PTGES3 and PPP5C. Interacts with GABARAP; interaction takes place in the presence of FNIP1 and/or FNIP2. Interacts with RILP; the interaction is direct and promotes association between RILP and RAB34. Interacts with KIF3A and KIF3B. Interacts with lactate dehydrogenase LDHA, but not LDHB; the interaction is direct, may preferentially bind LDHA dimers rather than tetramers, and regulates LDHA activity, acting as an uncompetitive inhibitor. In terms of processing, phosphorylation by ULK1 modulates the interaction with GABARAP and is required to regulate autophagy. In terms of tissue distribution, expressed in kidney.

The protein localises to the lysosome membrane. It localises to the cytoplasm. It is found in the cytosol. Its subcellular location is the cell projection. The protein resides in the cilium. The protein localises to the cytoskeleton. It localises to the microtubule organizing center. It is found in the centrosome. Its subcellular location is the spindle. The protein resides in the nucleus. GTPase-activating activity is inhibited in the folliculin complex (LFC), which stabilizes the GDP-bound state of RagA/RRAGA (or RagB/RRAGB), because Arg-164 is located far from the RagC/RRAGC or RagD/RRAGD nucleotide pocket. Disassembly of the LFC complex upon amino acid restimulation liberates the GTPase-activating activity. In terms of biological role, multi-functional protein, involved in both the cellular response to amino acid availability and in the regulation of glycolysis. GTPase-activating protein that plays a key role in the cellular response to amino acid availability through regulation of the non-canonical mTORC1 signaling cascade controlling the MiT/TFE factors TFEB and TFE3. Activates mTORC1 by acting as a GTPase-activating protein: specifically stimulates GTP hydrolysis by RagC/RRAGC or RagD/RRAGD, promoting the conversion to the GDP-bound state of RagC/RRAGC or RagD/RRAGD, and thereby activating the kinase activity of mTORC1. The GTPase-activating activity is inhibited during starvation and activated in presence of nutrients. Acts as a key component for non-canonical mTORC1-dependent control of the MiT/TFE factors TFEB and TFE3, while it is not involved in mTORC1-dependent phosphorylation of canonical RPS6KB1/S6K1 and EIF4EBP1/4E-BP1. In low-amino acid conditions, the lysosomal folliculin complex (LFC) is formed on the membrane of lysosomes, which inhibits the GTPase-activating activity of FLCN, inactivates mTORC1 and maximizes nuclear translocation of TFEB and TFE3. Upon amino acid restimulation, RagA/RRAGA (or RagB/RRAGB) nucleotide exchange promotes disassembly of the LFC complex and liberates the GTPase-activating activity of FLCN, leading to activation of mTORC1 and subsequent cytoplasmic retention of TFEB and TFE3. Indirectly acts as a positive regulator of Wnt signaling by promoting mTOR-dependent cytoplasmic retention of MiT/TFE factor TFE3. Required for the exit of hematopoietic stem cell from pluripotency by promoting mTOR-dependent cytoplasmic retention of TFE3, thereby increasing Wnt signaling. Involved in the control of embryonic stem cells differentiation; together with LAMTOR1 it is necessary to recruit and activate RagC/RRAGC and RagD/RRAGD at the lysosomes, and to induce exit of embryonic stem cells from pluripotency via non-canonical, mTOR-independent TFE3 inactivation. Acts as an inhibitor of browning of adipose tissue by regulating mTOR-dependent cytoplasmic retention of TFE3. In response to flow stress, regulates STK11/LKB1 accumulation and mTORC1 activation through primary cilia: may act by recruiting STK11/LKB1 to primary cilia for activation of AMPK resided at basal bodies, causing mTORC1 down-regulation. Together with FNIP1 and/or FNIP2, regulates autophagy: following phosphorylation by ULK1, interacts with GABARAP and promotes autophagy. Required for starvation-induced perinuclear clustering of lysosomes by promoting association of RILP with its effector RAB34. Regulates glycolysis by binding to lactate dehydrogenase LDHA, acting as an uncompetitive inhibitor. This is Folliculin from Rattus norvegicus (Rat).